We begin with the raw amino-acid sequence, 253 residues long: 4-hydroxy-tetrahydrodipicolinate reductase (253 aa).

Residues 8 to 13 (GAKGRM), Asp-34, 76 to 78 (GTT), and 108 to 111 (APNF) each bind NAD(+). Residue His-138 is the Proton donor/acceptor of the active site. Residue His-139 coordinates (S)-2,3,4,5-tetrahydrodipicolinate. The active-site Proton donor is the Lys-142. 148-149 (GT) provides a ligand contact to (S)-2,3,4,5-tetrahydrodipicolinate.

Belongs to the DapB family.

It localises to the cytoplasm. It carries out the reaction (S)-2,3,4,5-tetrahydrodipicolinate + NAD(+) + H2O = (2S,4S)-4-hydroxy-2,3,4,5-tetrahydrodipicolinate + NADH + H(+). The enzyme catalyses (S)-2,3,4,5-tetrahydrodipicolinate + NADP(+) + H2O = (2S,4S)-4-hydroxy-2,3,4,5-tetrahydrodipicolinate + NADPH + H(+). It functions in the pathway amino-acid biosynthesis; L-lysine biosynthesis via DAP pathway; (S)-tetrahydrodipicolinate from L-aspartate: step 4/4. In terms of biological role, catalyzes the conversion of 4-hydroxy-tetrahydrodipicolinate (HTPA) to tetrahydrodipicolinate. The protein is 4-hydroxy-tetrahydrodipicolinate reductase of Bifidobacterium animalis subsp. lactis (strain AD011).